The primary structure comprises 129 residues: Phosphoribosyl-AMP cyclohydrolase (129 aa).

Position 76 (aspartate 76) interacts with Mg(2+). Cysteine 77 is a Zn(2+) binding site. 2 residues coordinate Mg(2+): aspartate 78 and aspartate 80. Residues cysteine 97 and cysteine 104 each coordinate Zn(2+).

It belongs to the PRA-CH family. In terms of assembly, homodimer. Mg(2+) is required as a cofactor. It depends on Zn(2+) as a cofactor.

Its subcellular location is the cytoplasm. The enzyme catalyses 1-(5-phospho-beta-D-ribosyl)-5'-AMP + H2O = 1-(5-phospho-beta-D-ribosyl)-5-[(5-phospho-beta-D-ribosylamino)methylideneamino]imidazole-4-carboxamide. Its pathway is amino-acid biosynthesis; L-histidine biosynthesis; L-histidine from 5-phospho-alpha-D-ribose 1-diphosphate: step 3/9. In terms of biological role, catalyzes the hydrolysis of the adenine ring of phosphoribosyl-AMP. The polypeptide is Phosphoribosyl-AMP cyclohydrolase (Polaromonas sp. (strain JS666 / ATCC BAA-500)).